Reading from the N-terminus, the 446-residue chain is Probable beta-1,4-xylosyltransferase IRX9L (446 aa).

The disordered stretch occupies residues 1 to 26 (MSRRNAGAMQREGSVKDWEEFDPSPS). The Cytoplasmic segment spans residues 1–85 (MSRRNAGAMQ…SRSKGMSLKR (85 aa)). Residues 86–106 (AMLQLLVCFMVGIFIGFTPPF) traverse the membrane as a helical; Signal-anchor for type II membrane protein segment. Residues 107-446 (SVDLPGKIAS…RNLDAVVPIT (340 aa)) are Lumenal-facing. N-linked (GlcNAc...) asparagine glycans are attached at residues N185, N258, N361, and N411.

This sequence belongs to the glycosyltransferase 43 family.

The protein localises to the golgi apparatus membrane. Its function is as follows. Probable beta-1,4-xylosyltransferase involved in xylan biosynthesis in cell walls. The protein is Probable beta-1,4-xylosyltransferase IRX9L of Oryza sativa subsp. japonica (Rice).